Consider the following 174-residue polypeptide: Peptide deformylase (174 aa).

C98 and H140 together coordinate Fe cation. Residue E141 is part of the active site. H144 contacts Fe cation.

This sequence belongs to the polypeptide deformylase family. Requires Fe(2+) as cofactor.

It catalyses the reaction N-terminal N-formyl-L-methionyl-[peptide] + H2O = N-terminal L-methionyl-[peptide] + formate. In terms of biological role, removes the formyl group from the N-terminal Met of newly synthesized proteins. Requires at least a dipeptide for an efficient rate of reaction. N-terminal L-methionine is a prerequisite for activity but the enzyme has broad specificity at other positions. This chain is Peptide deformylase, found in Bradyrhizobium diazoefficiens (strain JCM 10833 / BCRC 13528 / IAM 13628 / NBRC 14792 / USDA 110).